Reading from the N-terminus, the 355-residue chain is UDP-N-acetylglucosamine--N-acetylmuramyl-(pentapeptide) pyrophosphoryl-undecaprenol N-acetylglucosamine transferase (355 aa).

UDP-N-acetyl-alpha-D-glucosamine contacts are provided by residues 15–17, Asn-127, Arg-163, Ser-191, Ile-244, 263–268, and Gln-288; these read TGG and ALTVSE.

The protein belongs to the glycosyltransferase 28 family. MurG subfamily.

It localises to the cell inner membrane. The catalysed reaction is di-trans,octa-cis-undecaprenyl diphospho-N-acetyl-alpha-D-muramoyl-L-alanyl-D-glutamyl-meso-2,6-diaminopimeloyl-D-alanyl-D-alanine + UDP-N-acetyl-alpha-D-glucosamine = di-trans,octa-cis-undecaprenyl diphospho-[N-acetyl-alpha-D-glucosaminyl-(1-&gt;4)]-N-acetyl-alpha-D-muramoyl-L-alanyl-D-glutamyl-meso-2,6-diaminopimeloyl-D-alanyl-D-alanine + UDP + H(+). It functions in the pathway cell wall biogenesis; peptidoglycan biosynthesis. Cell wall formation. Catalyzes the transfer of a GlcNAc subunit on undecaprenyl-pyrophosphoryl-MurNAc-pentapeptide (lipid intermediate I) to form undecaprenyl-pyrophosphoryl-MurNAc-(pentapeptide)GlcNAc (lipid intermediate II). The sequence is that of UDP-N-acetylglucosamine--N-acetylmuramyl-(pentapeptide) pyrophosphoryl-undecaprenol N-acetylglucosamine transferase from Escherichia coli (strain K12 / MC4100 / BW2952).